The primary structure comprises 755 residues: Tryptophan 2-monooxygenase (755 aa).

FMN is bound by residues serine 247, glutamate 267, lysine 275, and arginine 295. A substrate-binding site is contributed by arginine 295.

It belongs to the tryptophan 2-monooxygenase family. FMN is required as a cofactor.

It catalyses the reaction L-tryptophan + O2 = indole-3-acetamide + CO2 + H2O. It participates in plant hormone metabolism; auxin biosynthesis. This Agrobacterium vitis (Rhizobium vitis) protein is Tryptophan 2-monooxygenase (iaaM).